Consider the following 665-residue polypeptide: MTEIERIDQLREELHRHNYNYYVLNAPEITDQEFDKLMRELQDLEEKHPEHRDENSPSMRVGSDINKNFTQVVHKYPMLSLANTYSETEVTEFYDRVKKSLNEDFEICCEMKYDGTSISLTYENGKLVRAVTRGDGVQGDDVTGNVKTIRSIPLVLHGKGYPETFEIRGEILMPWVVFEELNKEREAREEPLFANPRNAASGTLKLQNSAIVASRKLDAYLYYLLGDNLPCDGHYENLKEAEKWGFKISDLTRKCKTLQEVFDFIKYWDVERKNLPVATDGIVLKVNSLRQQRNLGFTAKSPRWAIAYKFQAEQALTRLNKVTYQVGRTGAVTPVANLDPIQLSGTVVKRASLHNADIIEGLDLHIGDMVYVEKGGEIIPKIVGVDKDARIMIGDKVKFITHCPECGSKLVRYEGEAAYYCTNDAACPPQIKGKIEHFISRRAMNIDGLGPETVDQFYQEGLIRDVADLYTLKTSDIINLERMGEKSAENIIKGIEQSKEVPFERVLFALGIRFVGETVAKKVAKSFKSMDALADASLDNLIHVDEIGEKIAQSILLYFANPKNRDIIERLRVAGVRLEADEEDTSEHTDKLAGKSIVISGVFAHHSRDEYKELIEKHGGKNVGSISSKTSFILAGDNMGPSKLEKAQKLGVTIVSEEEFLQMIE.

Residues 31 to 35 (DQEFD), 80 to 81 (SL), and Glu-110 contribute to the NAD(+) site. Lys-112 acts as the N6-AMP-lysine intermediate in catalysis. Residues Arg-133, Glu-170, Lys-285, and Lys-309 each contribute to the NAD(+) site. 4 residues coordinate Zn(2+): Cys-403, Cys-406, Cys-421, and Cys-427. Positions 587–665 (EHTDKLAGKS…SEEEFLQMIE (79 aa)) constitute a BRCT domain.

It belongs to the NAD-dependent DNA ligase family. LigA subfamily. It depends on Mg(2+) as a cofactor. Mn(2+) serves as cofactor.

The enzyme catalyses NAD(+) + (deoxyribonucleotide)n-3'-hydroxyl + 5'-phospho-(deoxyribonucleotide)m = (deoxyribonucleotide)n+m + AMP + beta-nicotinamide D-nucleotide.. Its function is as follows. DNA ligase that catalyzes the formation of phosphodiester linkages between 5'-phosphoryl and 3'-hydroxyl groups in double-stranded DNA using NAD as a coenzyme and as the energy source for the reaction. It is essential for DNA replication and repair of damaged DNA. This chain is DNA ligase, found in Phocaeicola vulgatus (strain ATCC 8482 / DSM 1447 / JCM 5826 / CCUG 4940 / NBRC 14291 / NCTC 11154) (Bacteroides vulgatus).